The sequence spans 565 residues: Periplasmic trehalase (565 aa).

The signal sequence occupies residues 1 to 30 (MKSPAPSRPQKMALIPACIFLCFAALSVQA). Residues Arg152, 159–160 (WD), Asn196, 205–207 (RSQ), 277–279 (RPE), and Gly310 contribute to the substrate site. Catalysis depends on proton donor/acceptor residues Asp312 and Glu496. Substrate is bound at residue Glu511. A disordered region spans residues 538-565 (PCDNVPATRPTVKSATTQPSTKEAQPTP). Polar residues predominate over residues 548-565 (TVKSATTQPSTKEAQPTP).

The protein belongs to the glycosyl hydrolase 37 family. Monomer.

The protein localises to the periplasm. The catalysed reaction is alpha,alpha-trehalose + H2O = alpha-D-glucose + beta-D-glucose. In terms of biological role, provides the cells with the ability to utilize trehalose at high osmolarity by splitting it into glucose molecules that can subsequently be taken up by the phosphotransferase-mediated uptake system. The sequence is that of Periplasmic trehalase from Escherichia coli O139:H28 (strain E24377A / ETEC).